A 290-amino-acid chain; its full sequence is ATP synthase gamma chain (290 aa).

It belongs to the ATPase gamma chain family. In terms of assembly, F-type ATPases have 2 components, CF(1) - the catalytic core - and CF(0) - the membrane proton channel. CF(1) has five subunits: alpha(3), beta(3), gamma(1), delta(1), epsilon(1). CF(0) has three main subunits: a, b and c.

The protein resides in the cell inner membrane. Its function is as follows. Produces ATP from ADP in the presence of a proton gradient across the membrane. The gamma chain is believed to be important in regulating ATPase activity and the flow of protons through the CF(0) complex. The polypeptide is ATP synthase gamma chain (Chlorobium luteolum (strain DSM 273 / BCRC 81028 / 2530) (Pelodictyon luteolum)).